The sequence spans 611 residues: Immunoglobulin superfamily member 8 (611 aa).

The N-terminal stretch at 1 to 25 (MGVPSPTPLSSLLLLLLILGTRCYA) is a signal peptide. 4 consecutive Ig-like C2-type domains span residues 26-143 (RQVH…AKVE), 160-284 (PRGR…WVQV), 301-422 (SQLA…EAAS), and 429-554 (PVHV…ADYS). Residues 26 to 577 (RQVHVPRGPL…VYPYTHAVDT (552 aa)) lie on the Extracellular side of the membrane. Cys47 and Cys125 are joined by a disulfide. N-linked (GlcNAc...) asparagine glycosylation is found at Asn48 and Asn137. A disulfide bridge connects residues Cys184 and Cys268. Residues 272-274 (EWI) carry the EWI motif motif. Cystine bridges form between Cys324-Cys404 and Cys460-Cys542. Asn325 carries an N-linked (GlcNAc...) asparagine glycan. Ser516 bears the Phosphoserine mark. A helical transmembrane segment spans residues 578–598 (LFVPLLVGTGVALVTGASVLA). The Cytoplasmic segment spans residues 599-611 (TITCCFMKRMRKR). S-palmitoyl cysteine attachment occurs at residues Cys602 and Cys603.

Interacts directly with CD82 and CD9/tetraspanin-29. Also interacts with integrin alpha-3/beta-1 and integrin alpha-4/beta-1. Part of a complex composed of CD9, PTGFRN and CD81. Interacts with CD81/tetraspanin-28. As to expression, expressed in lymphocytes as well as in many tissues with higher expression in brain. Detected in all regions of the brain with weak expression in the pituitary. Expressed selectively by neurons but not by glial cells. Expressed in myoblasts (at protein level).

Its subcellular location is the cell membrane. Its function is as follows. Member of the immunoglobulin superfamily (IgSF) that links tetraspanin-enriched microdomains to the actin cytoskeleton and plays several important roles in innate and adaptive immunity. Acts as an inducible receptor of HSPA8 on dendritic cells to enhance the CCL21/SLC-dependent migration of activated mature dendritic cells while attenuating their antigen-specific stimulatory capacities. In complex with alpha-actinins ACTN1 and ACTN4, regulates actin dynamics in the immune synapse and subsequent T-cell activation. Inhibits the entry of several viruses such as hepatitis C Virus (HCV) or HIV-1. Mechanistically, promotes a change in CD81 organization at the plasma membrane by significantly restricting its diffusion which in turn influences CD81 interaction with Claudin-1/CLDN1, preventing CLDN1 from acting as a co-receptor required for HCV entry. Accumulates at the presynaptic terminal, the producer cell side of the virological synapse, to prevent HIV-1 Env-mediated cell-cell fusion. Highly expressed on malignant cells with antigen presentation defects, interacts with NK receptor KLRA9 to suppress NK-cell cytotoxicity. May participate in the regulation of neurite outgrowth and maintenance of the neural network in the adult brain. The chain is Immunoglobulin superfamily member 8 (Igsf8) from Mus musculus (Mouse).